We begin with the raw amino-acid sequence, 358 residues long: MSAASLRLVDTPMDKQKALDAALGQIERAFGKGSIMKLGAREAMAETEAISTGSLGLDIALGIGGLPRGRIVEIYGPESSGKTTLALHAIAEAQKAGGTCAFVDAEHALDPAYARKLGVDVDELLISQPDAGEQALEIADTLVRSGAIDVLVVDSVAALVPRAELEGEMGDSHVGLHARLMSQALRKLTGSISKSRCLVIFINQIRLKIGVMFGNPETTTGGNALKFYASIRLDIRRIGAIKDRDNVVGNQTRVKVVKNKMAPPFRVVEFDIMYGEGVSKVGELLDLGIQAGVVEKSGAWFSYDGQRIGQGRENAKTFLRNNAAVAEAIEAKVRANAGLVASAMMGAPESDGDAASPD.

76 to 83 (GPESSGKT) provides a ligand contact to ATP.

This sequence belongs to the RecA family.

The protein localises to the cytoplasm. In terms of biological role, can catalyze the hydrolysis of ATP in the presence of single-stranded DNA, the ATP-dependent uptake of single-stranded DNA by duplex DNA, and the ATP-dependent hybridization of homologous single-stranded DNAs. It interacts with LexA causing its activation and leading to its autocatalytic cleavage. In Rhodospirillum centenum (strain ATCC 51521 / SW), this protein is Protein RecA.